The chain runs to 185 residues: Homeobox-leucine zipper protein ATHB-22 (185 aa).

A DNA-binding region (homeobox) is located at residues 76-135; the sequence is TSEQLKFLERSFQEEIKLNPDRKMKLNPDRKMKLSKELGLQPRQIAVWFQNRKARWKNKQ. A leucine-zipper region spans residues 136–164; that stretch reads LEHLYESLRQEFDIVSREKELLQEELIQL.

It belongs to the HD-ZIP homeobox family. Class I subfamily. In terms of tissue distribution, expressed in siliques.

It is found in the nucleus. Functionally, probable transcription factor. This is Homeobox-leucine zipper protein ATHB-22 (ATHB-22) from Arabidopsis thaliana (Mouse-ear cress).